The primary structure comprises 130 residues: Small ribosomal subunit protein uS8 (130 aa).

Belongs to the universal ribosomal protein uS8 family. In terms of assembly, part of the 30S ribosomal subunit. Contacts proteins S5 and S12.

In terms of biological role, one of the primary rRNA binding proteins, it binds directly to 16S rRNA central domain where it helps coordinate assembly of the platform of the 30S subunit. This chain is Small ribosomal subunit protein uS8, found in Enterobacter sp. (strain 638).